The following is a 203-amino-acid chain: Small ribosomal subunit protein uS10m (203 aa).

The N-terminal 14 residues, 1 to 14 (MLRNTIALRSFIRT), are a transit peptide targeting the mitochondrion. The residue at position 193 (Ser-193) is a Phosphoserine.

Belongs to the universal ribosomal protein uS10 family. Component of the mitochondrial small ribosomal subunit (mt-SSU). Mature yeast 74S mitochondrial ribosomes consist of a small (37S) and a large (54S) subunit. The 37S small subunit contains a 15S ribosomal RNA (15S mt-rRNA) and 34 different proteins. The 54S large subunit contains a 21S rRNA (21S mt-rRNA) and 46 different proteins.

It localises to the mitochondrion. Functionally, component of the mitochondrial ribosome (mitoribosome), a dedicated translation machinery responsible for the synthesis of mitochondrial genome-encoded proteins, including at least some of the essential transmembrane subunits of the mitochondrial respiratory chain. The mitoribosomes are attached to the mitochondrial inner membrane and translation products are cotranslationally integrated into the membrane. The sequence is that of Small ribosomal subunit protein uS10m (RSM10) from Saccharomyces cerevisiae (strain ATCC 204508 / S288c) (Baker's yeast).